We begin with the raw amino-acid sequence, 107 residues long: UPF0145 protein MAB_3451c (107 aa).

The protein belongs to the UPF0145 family.

This is UPF0145 protein MAB_3451c from Mycobacteroides abscessus (strain ATCC 19977 / DSM 44196 / CCUG 20993 / CIP 104536 / JCM 13569 / NCTC 13031 / TMC 1543 / L948) (Mycobacterium abscessus).